The following is a 2230-amino-acid chain: Genome polyprotein (2230 aa).

Residues 59–80 form a disordered region; it reads TAEVGAHQTEPLKTSVDKPGSK. 2 short sequence motifs ((L)YPX(n)L motif) span residues 171–175 and 204–209; these read YPHGL and YPVWEL. Residues 770–840 are involved in P1-2A pentamerization; that stretch reads MLDRIASGDL…PRKVKGLFSQ (71 aa). Residues 1015–1035 form a helical membrane-spanning segment; it reads TVEIINTVLCFVKSGILLYVI. Residues 1047-1074 form a membrane-penetrating ability region; that stretch reads IGLLQVMNYADIGCSVISCGKIFSKMLE. A coiled-coil region spans residues 1131–1156; sequence KKKDVLNVLKENQHRIEKAIEEADQF. The region spanning 1208–1370 is the SF3 helicase domain; it reads HQKLKNLGSI…SFYKNAHNDM (163 aa). Residue 1234–1241 coordinates ATP; it reads GKRGGGKS. A helical transmembrane segment spans residues 1466-1486; sequence WVAIGAAVGVLGVLVGGWFVY. Tyrosine 1501 bears the O-(5'-phospho-RNA)-tyrosine mark. Positions 1516 to 1730 constitute a Peptidase C3 domain; it reads DPVDSQSTLE…VAKLVTQEMF (215 aa). Residues histidine 1565, aspartate 1605, and cysteine 1693 each act as for protease 3C activity in the active site. Positions 1979–2100 constitute a RdRp catalytic domain; sequence DVGLDLDFSS…VFSRNVQIDN (122 aa).

It belongs to the picornaviridae polyprotein family. In terms of assembly, homodimer. Homomultimer; probably interacts with membranes in a multimeric form. Seems to assemble into amyloid-like fibers. As to quaternary structure, homodimer. Monomer. Interacts with protein 3CD. Interacts with host ACBD3. In terms of assembly, interacts with protein 3AB. As to quaternary structure, interacts with human MAVS. Homodimer; disulfide-linked. In terms of assembly, homopentamer. Homooligomer. As to quaternary structure, interacts with capsid protein VP2. Interacts with capsid protein VP3. Interacts with capsid protein VP1. Interacts with capsid protein VP3. In terms of assembly, interacts with capsid protein VP1. Interacts with capsid protein VP2. Specific enzymatic cleavages by viral protease in vivo yield a variety of precursors and mature proteins. Polyprotein processing intermediates are produced, such as P1-2A which is a functional precursor of the structural proteins, VP0 which is a VP4-VP2 precursor, VP1-2A precursor, 3ABC precursor which is a stable and catalytically active precursor of 3A, 3B and 3C proteins, 3AB and 3CD precursors. The assembly signal 2A is removed from VP1-2A by a host protease, possibly host Cathepsin L. This cleavage occurs over a region of 3 amino-acids probably generating VP1 proteins with heterogeneous C-termini. In terms of processing, during virion maturation, immature virions are rendered infectious following cleavage of VP0 into VP4 and VP2. This maturation seems to be an autocatalytic event triggered by the presence of RNA in the capsid and is followed by a conformational change of the particle. Post-translationally, the assembly signal 2A is removed from VP1-2A by a host protease, possibly host Cathepsin L in naked virions. This cleavage does not occur in enveloped virions. This cleavage occurs over a region of 3 amino-acids probably generating VP1 proteins with heterogeneous C-termini. VPg is uridylylated prior to priming replication into VPg-pUpU. In terms of processing, unlike other picornaviruses, does not seem to be myristoylated.

It is found in the virion. It localises to the host endosome. Its subcellular location is the host multivesicular body. The protein resides in the host membrane. The protein localises to the host mitochondrion outer membrane. It is found in the host cytoplasm. It localises to the host cytoplasmic vesicle membrane. The catalysed reaction is RNA(n) + a ribonucleoside 5'-triphosphate = RNA(n+1) + diphosphate. The enzyme catalyses a ribonucleoside 5'-triphosphate + H2O = a ribonucleoside 5'-diphosphate + phosphate + H(+). It catalyses the reaction Selective cleavage of Gln-|-Gly bond in the poliovirus polyprotein. In other picornavirus reactions Glu may be substituted for Gln, and Ser or Thr for Gly.. Its function is as follows. Capsid proteins VP1, VP2, and VP3 form a closed capsid enclosing the viral positive strand RNA genome. All these proteins contain a beta-sheet structure called beta-barrel jelly roll. Together they form an icosahedral capsid (T=3) composed of 60 copies of each VP1, VP2, and VP3, with a diameter of approximately 300 Angstroms. VP1 is situated at the 12 fivefold axes, whereas VP2 and VP3 are located at the quasi-sixfold axes. The naked capsid interacts with the host receptor HAVCR1 to provide virion attachment to and probably entry into the target cell. Functionally, VP0 precursor is a component of the immature procapsids. Plays a role in the assembly of the 12 pentamers into an icosahedral structure. Has not been detected in mature virions, supposedly owing to its small size. In terms of biological role, precursor component of immature procapsids that corresponds to an extended form of the structural protein VP1. After maturation, possibly by the host Cathepsin L, the assembly signal 2A is cleaved to give rise to the mature VP1 protein. Its function is as follows. Functions as a viroporin. Affects membrane integrity and causes an increase in membrane permeability. Involved in host intracellular membrane rearrangements probably to give rise to the viral factories. Does not disrupt calcium homeostasis or glycoprotein trafficking. Antagonizes the innate immune response of the host by suppressing IFN-beta synthesis, which it achieves by interfering with the RIG-I/IFIH1 pathway. Functionally, affects membrane integrity and causes an increase in membrane permeability. Associates with and induces structural rearrangements of intracellular membranes. Displays RNA-binding activity. In terms of biological role, the precursor 3ABC is targeted to the mitochondrial membrane where protease 3C activity cleaves and inhibits the host antiviral protein MAVS, thereby disrupting activation of IRF3 through the IFIH1/MDA5 pathway. In vivo, the protease activity of 3ABC precursor is more efficient in cleaving the 2BC precursor than that of protein 3C. The 3ABC precursor may therefore play a role in the proteolytic processing of the polyprotein. Possible viroporin. Its function is as follows. Interacts with the 3CD precursor and with RNA structures found at both the 5'- and 3'-termini of the viral genome. Since the 3AB precursor contains the hydrophobic domain 3A, it probably anchors the whole viral replicase complex to intracellular membranes on which viral RNA synthesis occurs. Functionally, may serve as membrane anchor to the 3AB and 3ABC precursors via its hydrophobic domain. May interact with RNA. Acts as a primer for viral RNA replication and remains covalently bound to viral genomic RNA. VPg is uridylylated prior to priming replication into VPg-pUpU. The VPg-pUpU is then used as primer on the genomic RNA poly(A) by the RNA-dependent RNA polymerase to replicate the viral genome. In terms of biological role, cysteine protease that generates mature viral proteins from the precursor polyprotein. In addition to its proteolytic activity, it binds to viral RNA, and thus influences viral genome replication. RNA and substrate bind cooperatively to the protease. Cleaves IKBKG/NEMO to impair innate immune signaling. Cleaves host PABPC1 which may participate in the switch of viral translation to RNA synthesis. Its function is as follows. Interacts with the 3AB precursor and with RNA structures found at both the 5'- and 3'-termini of the viral genome. Disrupts TLR3 signaling by degrading the host adapter protein TICAM1/TRIF. Functionally, RNA-directed RNA polymerase 3D-POL replicates genomic and antigenomic RNA by recognizing replications specific signals. The protein is Genome polyprotein of Callithrix (Owl-faced monkey).